The primary structure comprises 151 residues: UPF0179 protein MJ1627 (151 aa).

It belongs to the UPF0179 family.

The polypeptide is UPF0179 protein MJ1627 (Methanocaldococcus jannaschii (strain ATCC 43067 / DSM 2661 / JAL-1 / JCM 10045 / NBRC 100440) (Methanococcus jannaschii)).